The sequence spans 906 residues: Probable dipeptidyl-aminopeptidase B (906 aa).

The segment covering 1 to 11 (MRSSEDREDSE) has biased composition (acidic residues). The segment at 1-33 (MRSSEDREDSELLPANRPRSPSRSSYDSDDSGL) is disordered. Residues 1-85 (MRSSEDREDS…TKASSSRSRR (85 aa)) lie on the Cytoplasmic side of the membrane. Over residues 21–33 (PSRSSYDSDDSGL) the composition is skewed to low complexity. Residues 86-106 (LLWLVVLLCCGGWVVAFVLFI) form a helical; Signal-anchor for type II membrane protein membrane-spanning segment. Residues 107–906 (TQGRADYRTA…AKRVWPGFAH (800 aa)) are Vacuolar-facing. Residues asparagine 338 and asparagine 629 are each glycosylated (N-linked (GlcNAc...) asparagine). Residue serine 743 is the Charge relay system of the active site. An N-linked (GlcNAc...) asparagine glycan is attached at asparagine 797. Active-site charge relay system residues include aspartate 820 and histidine 853.

Belongs to the peptidase S9B family.

The protein localises to the vacuole membrane. The enzyme catalyses Release of an N-terminal dipeptide, Xaa-Yaa-|-Zaa-, from a polypeptide, preferentially when Yaa is Pro, provided Zaa is neither Pro nor hydroxyproline.. In terms of biological role, type IV dipeptidyl-peptidase which removes N-terminal dipeptides sequentially from polypeptides having unsubstituted N-termini provided that the penultimate residue is proline. This Emericella nidulans (strain FGSC A4 / ATCC 38163 / CBS 112.46 / NRRL 194 / M139) (Aspergillus nidulans) protein is Probable dipeptidyl-aminopeptidase B (dapB).